The primary structure comprises 277 residues: Diaminopimelate epimerase (277 aa).

N13, Q46, and N66 together coordinate substrate. C75 (proton donor) is an active-site residue. Residues 76–77 (GN), N160, N193, and 211–212 (ER) contribute to the substrate site. The Proton acceptor role is filled by C220. 221–222 (GS) is a binding site for substrate.

It belongs to the diaminopimelate epimerase family. As to quaternary structure, homodimer.

Its subcellular location is the cytoplasm. The catalysed reaction is (2S,6S)-2,6-diaminopimelate = meso-2,6-diaminopimelate. It functions in the pathway amino-acid biosynthesis; L-lysine biosynthesis via DAP pathway; DL-2,6-diaminopimelate from LL-2,6-diaminopimelate: step 1/1. Its function is as follows. Catalyzes the stereoinversion of LL-2,6-diaminopimelate (L,L-DAP) to meso-diaminopimelate (meso-DAP), a precursor of L-lysine and an essential component of the bacterial peptidoglycan. The sequence is that of Diaminopimelate epimerase from Legionella pneumophila subsp. pneumophila (strain Philadelphia 1 / ATCC 33152 / DSM 7513).